A 499-amino-acid polypeptide reads, in one-letter code: Cytochrome P450 77A1 (499 aa).

Cys-443 lines the heme pocket.

This sequence belongs to the cytochrome P450 family. It depends on heme as a cofactor.

This Solanum melongena (Eggplant) protein is Cytochrome P450 77A1 (CYP77A1).